The following is a 119-amino-acid chain: Ribonuclease P protein component (119 aa).

Belongs to the RnpA family. Consists of a catalytic RNA component (M1 or rnpB) and a protein subunit.

The enzyme catalyses Endonucleolytic cleavage of RNA, removing 5'-extranucleotides from tRNA precursor.. Functionally, RNaseP catalyzes the removal of the 5'-leader sequence from pre-tRNA to produce the mature 5'-terminus. It can also cleave other RNA substrates such as 4.5S RNA. The protein component plays an auxiliary but essential role in vivo by binding to the 5'-leader sequence and broadening the substrate specificity of the ribozyme. The chain is Ribonuclease P protein component from Mycobacterium avium (strain 104).